We begin with the raw amino-acid sequence, 152 residues long: MIDQNHDSEEQAQMQKLTRTVTLTVALTLVSGCSYFGVYKRDLAQGNLVTSAMAEQLQPGMTRQQVVNLMGSPMLEAPFDAQQWDYVYRLDKAYGGVEQRRLTLTFQGNRLADIDRHGDFSRPPSVADERGIGPTDSTNARGNLLNARPDDE.

The signal sequence occupies residues 1–32 (MIDQNHDSEEQAQMQKLTRTVTLTVALTLVSG). The N-palmitoyl cysteine moiety is linked to residue Cys33. The S-diacylglycerol cysteine moiety is linked to residue Cys33. The segment at 114-152 (IDRHGDFSRPPSVADERGIGPTDSTNARGNLLNARPDDE) is disordered.

This sequence belongs to the BamE family. As to quaternary structure, part of the Bam complex.

It is found in the cell outer membrane. Functionally, part of the outer membrane protein assembly complex, which is involved in assembly and insertion of beta-barrel proteins into the outer membrane. This Halomonas elongata (strain ATCC 33173 / DSM 2581 / NBRC 15536 / NCIMB 2198 / 1H9) protein is Outer membrane protein assembly factor BamE.